A 670-amino-acid chain; its full sequence is E3 ubiquitin-protein ligase TRAF7 (670 aa).

Disordered regions lie at residues 1–37 (MSSGKSARYNRFSGGPSNLPTPDVTTGTRMETTFGPA) and 49–97 (GTST…SLHS). Composition is skewed to polar residues over residues 15–31 (GPSNLPTPDVTTGTRME) and 49–67 (GTSTYKQHCRTPSSSSTLA). S61, S88, and S91 each carry phosphoserine. An RING-type zinc finger spans residues 131–165 (CQLCCSVFKDPVITTCGHTFCRRCALKSEKCPVDN). The TRAF-type zinc finger occupies 222–276 (HEGSCDYRPVRCPNNPSCPPLLRMNLEAHLKECEHIKCPHSKYGCTFIGNQDTYE). 7 WD repeats span residues 394 to 433 (GHQGPVWCLCVYSMGDLLFSGSSDKTIKVWDTCTTYKCQK), 437 to 474 (GHDGIVLALCIQGCKLYSGSADCTIIVWDIQNLQKVNT), 477 to 513 (AHDNPVCTLVSSHNVLFSGSLKAIKVWDIVGTELKLK), 515 to 554 (ELTGLNHWVRALVAAQSYLYSGSYQTIKIWDIRTLDCIHV), 557 to 594 (TSGGSVYSIAVTNHHIVCGTYENLIHVWDIESKEQVRT), 597 to 638 (GHVG…CTQT), and 641 to 669 (RHQGSVTALAVSRGRLFSGAVDSTVKVWT).

Belongs to the WD repeat TRAF7 family. In terms of assembly, homodimer. Interacts with MAP3K3 and promotes the kinase activity of this enzyme. Post-translationally, phosphorylated by MAP3K3. In terms of processing, ubiquitinates itself upon phosphorylation. Ubiquitously expressed with high levels in skeletal muscle, heart, colon, spleen, kidney, liver and placenta.

It is found in the cytoplasmic vesicle. The protein localises to the cytoplasm. It localises to the nucleus. The catalysed reaction is S-ubiquitinyl-[E2 ubiquitin-conjugating enzyme]-L-cysteine + [acceptor protein]-L-lysine = [E2 ubiquitin-conjugating enzyme]-L-cysteine + N(6)-ubiquitinyl-[acceptor protein]-L-lysine.. It functions in the pathway protein modification; protein ubiquitination. In terms of biological role, E3 ubiquitin and SUMO-protein ligase that plays a role in different biological processes such as innate immunity, inflammation or apoptosis. Potentiates MAP3K3-mediated activation of JUN/AP1 and DDIT3 transcriptional regulators. Negatively regulates MYB transcriptional activity by sequestering it to the cytosol via SUMOylation. Plays a role in the phosphorylation of MAPK1 and/or MAPK3, probably via its interaction with MAP3K3. Negatively regulates RLR-mediated innate immunity by promoting 'Lys-48'-linked ubiquitination of TBK1 through its RING domain to inhibit the cellular antiviral response. Promotes 'Lys-29'-linked polyubiquitination of NEMO/IKBKG and RELA leading to targeting these two proteins to lysosomal degradative pathways, reducing the transcriptional activity of NF-kappa-B. The polypeptide is E3 ubiquitin-protein ligase TRAF7 (TRAF7) (Homo sapiens (Human)).